The primary structure comprises 426 residues: Proline--tRNA ligase (426 aa).

The protein belongs to the class-II aminoacyl-tRNA synthetase family. ProS type 2 subfamily. Homodimer.

The protein resides in the cytoplasm. It catalyses the reaction tRNA(Pro) + L-proline + ATP = L-prolyl-tRNA(Pro) + AMP + diphosphate. Its function is as follows. Catalyzes the attachment of proline to tRNA(Pro) in a two-step reaction: proline is first activated by ATP to form Pro-AMP and then transferred to the acceptor end of tRNA(Pro). The polypeptide is Proline--tRNA ligase (Rickettsia africae (strain ESF-5)).